A 243-amino-acid polypeptide reads, in one-letter code: Homeobox protein nob-1 (243 aa).

Residues 1-12 are compositionally biased toward polar residues; sequence MISVMQQMINND. Disordered stretches follow at residues 1–23 and 40–67; these read MISV…SITS and SIQG…TGMV. Residues 162–221 constitute a DNA-binding region (homeobox); it reads GKKKRQPYKKDQISRLEYEYSVNQYLTNKRRSELSAQLMLDEKQVKVWFQNRRMKDKKLR.

Belongs to the abd-b homeobox family. As to quaternary structure, interacts with nuclear receptor nhr-25. Interacts with geminin homolog gmn-1. Interacts with homeodomain protein ceh-20.

The protein localises to the nucleus. Its function is as follows. Transcription factor, involved in posterior embryonic patterning, morphogenetic movements of the posterior hypodermis, and cell fate specification. Binds to the 5'-TAGT-3' motif in regulatory elements of genes, including Meis protein psa-3 and microRNA mir-57. Involved in a negative regulatory loop with mir-57 to specify posterior cell identities. Required for asymmetric division of the T hypodermal cell, acting via the regulation of asymmetric expression of psa-3 in cooperation with ceh-20 and the Wnt-MAPK pathway. Involved in the regulation of the onset of non-apoptotic cell death in the linker cell, acting together with the Wnt signaling pathway. Involved in promoting embryogenesis, in concert with orphan nuclear receptor nhr-25. May regulate expression of transcription factor dmd-3. This is Homeobox protein nob-1 from Caenorhabditis elegans.